The chain runs to 407 residues: Phosphopentomutase (407 aa).

Mn(2+)-binding residues include D10, D306, H311, D347, H348, and H359.

Belongs to the phosphopentomutase family. The cofactor is Mn(2+).

It is found in the cytoplasm. The catalysed reaction is 2-deoxy-alpha-D-ribose 1-phosphate = 2-deoxy-D-ribose 5-phosphate. It catalyses the reaction alpha-D-ribose 1-phosphate = D-ribose 5-phosphate. The protein operates within carbohydrate degradation; 2-deoxy-D-ribose 1-phosphate degradation; D-glyceraldehyde 3-phosphate and acetaldehyde from 2-deoxy-alpha-D-ribose 1-phosphate: step 1/2. Isomerase that catalyzes the conversion of deoxy-ribose 1-phosphate (dRib-1-P) and ribose 1-phosphate (Rib-1-P) to deoxy-ribose 5-phosphate (dRib-5-P) and ribose 5-phosphate (Rib-5-P), respectively. The protein is Phosphopentomutase of Salmonella dublin (strain CT_02021853).